Consider the following 56-residue polypeptide: Ovomucoid (56 aa).

The 51-residue stretch at 6-56 (VDCSDHPKPACLQEQKPICGSDNKTYDNKCSFCNAVVDSNGTLTLSHFGKC) folds into the Kazal-like domain. 3 cysteine pairs are disulfide-bonded: Cys8–Cys38, Cys16–Cys35, and Cys24–Cys56. The N-linked (GlcNAc...) asparagine glycan is linked to Asn45.

The protein localises to the secreted. The sequence is that of Ovomucoid from Ortalis vetula (Plain chachalaca).